We begin with the raw amino-acid sequence, 367 residues long: Embryonic developmental protein tofu-6 (367 aa).

The RRM domain occupies 13–92 (AGFHIRNIPK…FTLKVTDHKN (80 aa)). A required for ife-3 interaction region spans residues 298 to 345 (KSILADRLQRKGVCEYLPRSQQPHYAYSRETLLQHNNSGVTAQISNDA).

Component of the pid-1 variant of the PETISCO complex (also called the pid-3, erh-2, tofu-6, and ife-3 small RNA complex) containing at least pid-1, tofu-6, ife-3, pid-3, and erh-2, which is required for the biogenesis of 21 nucleotide PIWI-interacting RNAs (piRNAs) that possess a uracil residue at the 5'-end (also called 21U-RNAs). Within the pid-1 variant of the PETISCO complex interacts with pid-1. Component of the tost-1 variant of the PETISCO complex (also called the pid-3, erh-2, tofu-6, and ife-3 small RNA complex) containing at least tost-1, tofu-6, ife-3, pid-3, and erh-2, which plays an essential role in embryogenesis. Within the tost-1 variant of the PETISCO complex interacts with tost-1. Within the pid-1 and tost-1 variants of the PETISCO complexes interacts (via C-terminus) with ife-3. Within the pid-1 and tost-1 variants of the PETISCO complexes interacts (via the RRM domain) with pid-3. Within the pid-1 and tost-1 variants of the PETISCO complexes interacts (via the RRM domain) with erh-2. In contrast to the pid-1 variant of the PETISCO complex, the tost-1 variant of the PETISCO complex plays a minor role in the biogenesis of 21U-RNAs. Interacts (via residues 120-314) with the PUCH complex subunit tofu-1 (via residues 82-172); the interaction between the PETISCO and PUCH complex members enhances piRNA production in vivo. As to expression, expression is restricted to the germline (at protein level).

It localises to the cytoplasm. The protein resides in the perinuclear region. The protein localises to the nucleus. Component of the pid-1 and tost-1 variants of the PETISCO complexes, which have roles in the biogenesis of a class of 21 nucleotide PIWI-interacting RNAs (piRNAs) that possess a uracil residue at the 5'-end (also called 21U-RNAs) and embryogenesis, respectively. Promotes the biogenesis of 21U-RNAs. Mediates the interaction between the PETISCO complex and the PUCH complex, the endoribonuclease complex processing the 5'-end of precursor piRNAs, thereby enhancing mature piRNA production. Required for chromosome segregation and cell division in early embryos. May have a role in DNA replication. This Caenorhabditis elegans protein is Embryonic developmental protein tofu-6.